Here is an 89-residue protein sequence, read N- to C-terminus: MANHKSAKKMIKVIAKRTLINKMRKSKTRTSIRKLVDIIKSGDKENVVLAFRNAESNLHKCVNKGVIHRNTAARKISRLNAKVKALMTA.

The protein belongs to the bacterial ribosomal protein bS20 family.

Binds directly to 16S ribosomal RNA. This Wolbachia sp. subsp. Drosophila simulans (strain wRi) protein is Small ribosomal subunit protein bS20.